The following is a 213-amino-acid chain: Ribonuclease T (213 aa).

The Exonuclease domain occupies 28–202 (VVVDVETGGF…YDTEQTARLF (175 aa)). Mg(2+)-binding residues include D31, E33, H189, and D194. H189 serves as the catalytic Proton donor/acceptor.

This sequence belongs to the RNase T family. In terms of assembly, homodimer. Requires Mg(2+) as cofactor.

Its function is as follows. Trims short 3' overhangs of a variety of RNA species, leaving a one or two nucleotide 3' overhang. Responsible for the end-turnover of tRNA: specifically removes the terminal AMP residue from uncharged tRNA (tRNA-C-C-A). Also appears to be involved in tRNA biosynthesis. This is Ribonuclease T from Xanthomonas axonopodis pv. citri (strain 306).